A 191-amino-acid chain; its full sequence is Shikimate kinase (191 aa).

14-19 (GSGKST) serves as a coordination point for ATP. S18 lines the Mg(2+) pocket. D36, R60, and G82 together coordinate substrate. Residue R120 participates in ATP binding. Substrate is bound at residue R147.

The protein belongs to the shikimate kinase family. In terms of assembly, monomer. It depends on Mg(2+) as a cofactor.

It localises to the cytoplasm. It catalyses the reaction shikimate + ATP = 3-phosphoshikimate + ADP + H(+). Its pathway is metabolic intermediate biosynthesis; chorismate biosynthesis; chorismate from D-erythrose 4-phosphate and phosphoenolpyruvate: step 5/7. Its function is as follows. Catalyzes the specific phosphorylation of the 3-hydroxyl group of shikimic acid using ATP as a cosubstrate. In Chlorobaculum tepidum (strain ATCC 49652 / DSM 12025 / NBRC 103806 / TLS) (Chlorobium tepidum), this protein is Shikimate kinase.